A 286-amino-acid polypeptide reads, in one-letter code: Pantothenate synthetase (286 aa).

ATP is bound at residue 30-37; it reads MGNLHAGH. Residue His-37 is the Proton donor of the active site. (R)-pantoate is bound at residue Gln-61. Gln-61 serves as a coordination point for beta-alanine. 149 to 152 provides a ligand contact to ATP; that stretch reads GEKD. (R)-pantoate is bound at residue Gln-155. ATP contacts are provided by residues Val-178 and 186 to 189; that span reads MSSR.

The protein belongs to the pantothenate synthetase family. As to quaternary structure, homodimer.

The protein resides in the cytoplasm. The catalysed reaction is (R)-pantoate + beta-alanine + ATP = (R)-pantothenate + AMP + diphosphate + H(+). It functions in the pathway cofactor biosynthesis; (R)-pantothenate biosynthesis; (R)-pantothenate from (R)-pantoate and beta-alanine: step 1/1. Catalyzes the condensation of pantoate with beta-alanine in an ATP-dependent reaction via a pantoyl-adenylate intermediate. In Thioalkalivibrio sulfidiphilus (strain HL-EbGR7), this protein is Pantothenate synthetase.